The chain runs to 546 residues: CTP synthase (546 aa).

The amidoligase domain stretch occupies residues 1-265; sequence MTKYVFVTGG…DEIVCHKLGI (265 aa). Ser13 contacts CTP. Ser13 is a UTP binding site. ATP contacts are provided by residues 14–19 and Asp71; that span reads SLGKGI. Mg(2+)-binding residues include Asp71 and Glu139. CTP is bound by residues 146 to 148, 186 to 191, and Lys222; these read DIE and KTKPTQ. Residues 186–191 and Lys222 contribute to the UTP site; that span reads KTKPTQ. The region spanning 290–543 is the Glutamine amidotransferase type-1 domain; the sequence is DIAFVGKYVD…VKAAIARHSA (254 aa). Position 351 (Gly351) interacts with L-glutamine. Cys378 acts as the Nucleophile; for glutamine hydrolysis in catalysis. Residues 379–382, Glu402, and Arg469 each bind L-glutamine; that span reads LGMQ. Active-site residues include His516 and Glu518.

Belongs to the CTP synthase family. In terms of assembly, homotetramer.

It carries out the reaction UTP + L-glutamine + ATP + H2O = CTP + L-glutamate + ADP + phosphate + 2 H(+). The catalysed reaction is L-glutamine + H2O = L-glutamate + NH4(+). The enzyme catalyses UTP + NH4(+) + ATP = CTP + ADP + phosphate + 2 H(+). The protein operates within pyrimidine metabolism; CTP biosynthesis via de novo pathway; CTP from UDP: step 2/2. Its activity is regulated as follows. Allosterically activated by GTP, when glutamine is the substrate; GTP has no effect on the reaction when ammonia is the substrate. The allosteric effector GTP functions by stabilizing the protein conformation that binds the tetrahedral intermediate(s) formed during glutamine hydrolysis. Inhibited by the product CTP, via allosteric rather than competitive inhibition. Functionally, catalyzes the ATP-dependent amination of UTP to CTP with either L-glutamine or ammonia as the source of nitrogen. Regulates intracellular CTP levels through interactions with the four ribonucleotide triphosphates. This chain is CTP synthase, found in Azoarcus sp. (strain BH72).